Here is a 69-residue protein sequence, read N- to C-terminus: Cytochrome b-c1 complex subunit 6 (69 aa).

Disulfide bonds link cysteine 17-cysteine 59 and cysteine 31-cysteine 45.

This sequence belongs to the UQCRH/QCR6 family. In terms of assembly, component of the ubiquinol-cytochrome c oxidoreductase (cytochrome b-c1 complex, complex III, CIII), a multisubunit enzyme composed of 3 respiratory subunits cytochrome b, cytochrome c1 and Rieske protein, 2 core protein subunits, and additional low-molecular weight protein subunits. The complex exists as an obligatory dimer and forms supercomplexes (SCs) in the inner mitochondrial membrane with cytochrome c oxidase (complex IV, CIV).

The protein resides in the mitochondrion inner membrane. Component of the ubiquinol-cytochrome c oxidoreductase, a multisubunit transmembrane complex that is part of the mitochondrial electron transport chain which drives oxidative phosphorylation. The respiratory chain contains 3 multisubunit complexes succinate dehydrogenase (complex II, CII), ubiquinol-cytochrome c oxidoreductase (cytochrome b-c1 complex, complex III, CIII) and cytochrome c oxidase (complex IV, CIV), that cooperate to transfer electrons derived from NADH and succinate to molecular oxygen, creating an electrochemical gradient over the inner membrane that drives transmembrane transport and the ATP synthase. The cytochrome b-c1 complex catalyzes electron transfer from ubiquinol to cytochrome c, linking this redox reaction to translocation of protons across the mitochondrial inner membrane, with protons being carried across the membrane as hydrogens on the quinol. In the process called Q cycle, 2 protons are consumed from the matrix, 4 protons are released into the intermembrane space and 2 electrons are passed to cytochrome c. This is Cytochrome b-c1 complex subunit 6 from Solanum tuberosum (Potato).